The sequence spans 337 residues: Ribosomal RNA small subunit methyltransferase H (337 aa).

Residues 36–38 (GGH), D56, F82, D100, and Q107 each bind S-adenosyl-L-methionine. Residues 317 to 337 (RRSGRIPNPQSPIPASQGDAR) form a disordered region.

It belongs to the methyltransferase superfamily. RsmH family.

It is found in the cytoplasm. The catalysed reaction is cytidine(1402) in 16S rRNA + S-adenosyl-L-methionine = N(4)-methylcytidine(1402) in 16S rRNA + S-adenosyl-L-homocysteine + H(+). In terms of biological role, specifically methylates the N4 position of cytidine in position 1402 (C1402) of 16S rRNA. This Xanthomonas oryzae pv. oryzae (strain KACC10331 / KXO85) protein is Ribosomal RNA small subunit methyltransferase H.